Consider the following 461-residue polypeptide: Glutamyl-tRNA reductase (461 aa).

Substrate-binding positions include 50-53, Ser-111, 116-118, and Gln-122; these read TCNR and EPQ. The active-site Nucleophile is the Cys-51. 191 to 196 is a binding site for NADP(+); sequence GAGEMA.

Belongs to the glutamyl-tRNA reductase family. Homodimer.

The catalysed reaction is (S)-4-amino-5-oxopentanoate + tRNA(Glu) + NADP(+) = L-glutamyl-tRNA(Glu) + NADPH + H(+). The protein operates within porphyrin-containing compound metabolism; protoporphyrin-IX biosynthesis; 5-aminolevulinate from L-glutamyl-tRNA(Glu): step 1/2. Catalyzes the NADPH-dependent reduction of glutamyl-tRNA(Glu) to glutamate 1-semialdehyde (GSA). The chain is Glutamyl-tRNA reductase from Syntrophobacter fumaroxidans (strain DSM 10017 / MPOB).